The primary structure comprises 422 residues: Bifunctional enzyme IspD/IspF (422 aa).

The interval 1-267 (MAVGLLLLAA…PISALSMPLP (267 aa)) is 2-C-methyl-D-erythritol 4-phosphate cytidylyltransferase. Residues 268–422 (LIGVGIDFHK…AIAVAQIYHR (155 aa)) form a 2-C-methyl-D-erythritol 2,4-cyclodiphosphate synthase region. D274 and H276 together coordinate a divalent metal cation. 4-CDP-2-C-methyl-D-erythritol 2-phosphate is bound by residues 274 to 276 (DFH) and 301 to 302 (HS). An a divalent metal cation-binding site is contributed by H309. 4-CDP-2-C-methyl-D-erythritol 2-phosphate contacts are provided by residues 323–325 (DIG), F404, and R407.

The protein in the N-terminal section; belongs to the IspD/TarI cytidylyltransferase family. IspD subfamily. In the C-terminal section; belongs to the IspF family. A divalent metal cation is required as a cofactor.

The enzyme catalyses 2-C-methyl-D-erythritol 4-phosphate + CTP + H(+) = 4-CDP-2-C-methyl-D-erythritol + diphosphate. It catalyses the reaction 4-CDP-2-C-methyl-D-erythritol 2-phosphate = 2-C-methyl-D-erythritol 2,4-cyclic diphosphate + CMP. Its pathway is isoprenoid biosynthesis; isopentenyl diphosphate biosynthesis via DXP pathway; isopentenyl diphosphate from 1-deoxy-D-xylulose 5-phosphate: step 2/6. It functions in the pathway isoprenoid biosynthesis; isopentenyl diphosphate biosynthesis via DXP pathway; isopentenyl diphosphate from 1-deoxy-D-xylulose 5-phosphate: step 4/6. Bifunctional enzyme that catalyzes the formation of 4-diphosphocytidyl-2-C-methyl-D-erythritol from CTP and 2-C-methyl-D-erythritol 4-phosphate (MEP) (IspD), and catalyzes the conversion of 4-diphosphocytidyl-2-C-methyl-D-erythritol 2-phosphate (CDP-ME2P) to 2-C-methyl-D-erythritol 2,4-cyclodiphosphate (ME-CPP) with a corresponding release of cytidine 5-monophosphate (CMP) (IspF). This is Bifunctional enzyme IspD/IspF from Tropheryma whipplei (strain TW08/27) (Whipple's bacillus).